The sequence spans 700 residues: Probable pre-mRNA-splicing factor ATP-dependent RNA helicase DEAH4 (700 aa).

An N-acetylalanine modification is found at alanine 2. The Helicase ATP-binding domain occupies 14–178 (VETVEKNSVV…FSGCPVLNVP (165 aa)). 27–34 (GETGSGKS) contributes to the ATP binding site. A DEAH box motif is present at residues 124 to 127 (DEAH). In terms of domain architecture, Helicase C-terminal spans 200-377 (SLKVAIDIHV…GSVLYLKSLD (178 aa)). 2 disordered regions span residues 463–486 (PARS…NGSG) and 654–682 (GPAP…SENV).

It belongs to the DEAD box helicase family. DEAH subfamily. PRP22 sub-subfamily.

The enzyme catalyses ATP + H2O = ADP + phosphate + H(+). Functionally, may be involved in pre-mRNA splicing. The sequence is that of Probable pre-mRNA-splicing factor ATP-dependent RNA helicase DEAH4 from Arabidopsis thaliana (Mouse-ear cress).